The primary structure comprises 216 residues: Uracil phosphoribosyltransferase (216 aa).

Residues Arg-85, Arg-110, and 135–143 (DPMVATGYS) contribute to the 5-phospho-alpha-D-ribose 1-diphosphate site. Residues Ile-200 and 205 to 207 (GDA) each bind uracil. Asp-206 contributes to the 5-phospho-alpha-D-ribose 1-diphosphate binding site.

The protein belongs to the UPRTase family. The cofactor is Mg(2+).

The enzyme catalyses UMP + diphosphate = 5-phospho-alpha-D-ribose 1-diphosphate + uracil. Its pathway is pyrimidine metabolism; UMP biosynthesis via salvage pathway; UMP from uracil: step 1/1. With respect to regulation, allosterically activated by GTP. Functionally, catalyzes the conversion of uracil and 5-phospho-alpha-D-ribose 1-diphosphate (PRPP) to UMP and diphosphate. The protein is Uracil phosphoribosyltransferase of Burkholderia pseudomallei (strain 668).